The chain runs to 178 residues: ATP-dependent protease subunit HslV (178 aa).

Residue Thr-7 is part of the active site. Residues Gly-162, Cys-165, and Thr-168 each contribute to the Na(+) site.

The protein belongs to the peptidase T1B family. HslV subfamily. As to quaternary structure, a double ring-shaped homohexamer of HslV is capped on each side by a ring-shaped HslU homohexamer. The assembly of the HslU/HslV complex is dependent on binding of ATP.

The protein resides in the cytoplasm. It carries out the reaction ATP-dependent cleavage of peptide bonds with broad specificity.. With respect to regulation, allosterically activated by HslU binding. Protease subunit of a proteasome-like degradation complex believed to be a general protein degrading machinery. The sequence is that of ATP-dependent protease subunit HslV from Burkholderia vietnamiensis (strain G4 / LMG 22486) (Burkholderia cepacia (strain R1808)).